The sequence spans 384 residues: Alanine racemase (384 aa).

Lys-42 acts as the Proton acceptor; specific for D-alanine in catalysis. Lys-42 is modified (N6-(pyridoxal phosphate)lysine). Residue Arg-140 participates in substrate binding. Tyr-271 functions as the Proton acceptor; specific for L-alanine in the catalytic mechanism. Met-319 contacts substrate.

Belongs to the alanine racemase family. Homodimer. Requires pyridoxal 5'-phosphate as cofactor.

It catalyses the reaction L-alanine = D-alanine. The protein operates within amino-acid biosynthesis; D-alanine biosynthesis; D-alanine from L-alanine: step 1/1. Its function is as follows. Catalyzes the interconversion of L-alanine and D-alanine. In Mycobacterium tuberculosis (strain CDC 1551 / Oshkosh), this protein is Alanine racemase (alr).